A 242-amino-acid chain; its full sequence is Anthranilate phosphoribosyltransferase (242 aa).

Residues glycine 79, 82 to 83 (GD), threonine 87, 89 to 92 (NVST), 107 to 115 (KHGNRAVSS), and serine 119 contribute to the 5-phospho-alpha-D-ribose 1-diphosphate site. Anthranilate is bound at residue glycine 79. Serine 91 is a binding site for Mg(2+). Asparagine 110 serves as a coordination point for anthranilate. Arginine 165 is an anthranilate binding site. Mg(2+) contacts are provided by aspartate 224 and glutamate 225.

Belongs to the anthranilate phosphoribosyltransferase family. Homodimer. Mg(2+) serves as cofactor.

The catalysed reaction is N-(5-phospho-beta-D-ribosyl)anthranilate + diphosphate = 5-phospho-alpha-D-ribose 1-diphosphate + anthranilate. It functions in the pathway amino-acid biosynthesis; L-tryptophan biosynthesis; L-tryptophan from chorismate: step 2/5. Catalyzes the transfer of the phosphoribosyl group of 5-phosphorylribose-1-pyrophosphate (PRPP) to anthranilate to yield N-(5'-phosphoribosyl)-anthranilate (PRA). This is Anthranilate phosphoribosyltransferase (trpD) from Bacillus caldotenax.